A 474-amino-acid polypeptide reads, in one-letter code: Synaptotagmin 1 (474 aa).

Disordered regions lie at residues methionine 1–glutamate 49 and glutamine 63–threonine 84. Topologically, residues methionine 1–arginine 107 are vesicular. A compositionally biased stretch (basic and acidic residues) spans valine 30–glutamate 49. The segment covering glutamate 69 to threonine 84 has biased composition (low complexity). Residues threonine 108–valine 134 form a helical membrane-spanning segment. Residues arginine 135 to lysine 474 are Cytoplasmic-facing. Residues proline 170 to serine 189 are disordered. Residues aspartate 171–lysine 187 show a composition bias toward acidic residues. Positions aspartate 186 to methionine 434 are phospholipid binding. C2 domains follow at residues lysine 192–arginine 312 and lysine 325–histidine 458. 13 residues coordinate Ca(2+): leucine 222, aspartate 223, aspartate 229, aspartate 282, phenylalanine 283, aspartate 284, serine 287, lysine 288, aspartate 290, aspartate 356, aspartate 362, aspartate 416, and aspartate 418.

This sequence belongs to the synaptotagmin family. Homodimer or homotrimer (Potential). Identified in a complex with Syn and nwk. Interacts with StnA and StnB via its second C2 domain. This interaction may mediate its retrieval from the plasma membrane, thereby facilitating the internalization of multiple synaptic vesicles from the plasma membrane. It depends on Ca(2+) as a cofactor.

Its subcellular location is the cytoplasmic vesicle. The protein localises to the secretory vesicle. It is found in the synaptic vesicle membrane. The protein resides in the synapse. Its function is as follows. May have a regulatory role in the membrane interactions during trafficking of synaptic vesicles at the active zone of the synapse. It binds acidic phospholipids with a specificity that requires the presence of both an acidic head group and a diacyl backbone. This Drosophila melanogaster (Fruit fly) protein is Synaptotagmin 1 (Syt1).